The sequence spans 193 residues: Cell wall galactomannoprotein (193 aa).

Residues 1-17 form the signal peptide; it reads MFFRILALLPLVFLVTA. N-linked (GlcNAc...) asparagine glycans are attached at residues Asn38 and Asn173.

Belongs to the cell wall mannoprotein 1 family. Post-translationally, galactomannoprotein, glycosylated.

It is found in the secreted. The protein localises to the cell wall. In terms of biological role, constitutive protein of the cell wall. The protein is Cell wall galactomannoprotein of Armillaria ostoyae (Armillaria root rot fungus).